Here is a 568-residue protein sequence, read N- to C-terminus: MDQDAFFFERDPEAEGEAPRKQESLSGVIGLLDVVLSYKPTEIGEDRSWLHGIIDNPEENKPSCKADDNNKDRAISTPTQDHRSGEESGISRRTSESKTETHARLLDQQSIHRASRRGTSPNPLPENMGNERNTRIDEDSPNERRHQRSVLTDEDRKMAEDSNKREEDQVEGFPEEIRRSTPLSDDGESRTNNNGRSMETSSTHSTRITDVIINPSPELEDAVLQRNKRRPTIIRRNQTRSERTQNSELHKSTSENSSNLEDHNTKTSPKGLPPKNEESAATPKNNHNHRKTKYTMNNANNNTKSPPTPEHDTTANEEETSNTSVDEMAKLLVSLGVMKSQHEFELSRSASHVFAKRMLKSANYKEMTFNLCGMLISVEKSLENKVEENRTLLKQIQEEINSSRDLHKRFSEYQKEQNSLMMANLSTLHIITDRGGKTGDPSDTTRSPSVFTKGKDNKVKKTRFDPSMEALGGQEFKPDLIREDELRDDIKNPVLEENNNDLQASNASRLIPSTEKHTLHSLKLVIENSPLSRVEKKAYIKSLYKCRTNQEVKNVMELFEEDIDSLTN.

A disordered region spans residues 1–24; it reads MDQDAFFFERDPEAEGEAPRKQES. The span at 7-23 shows a compositional bias: basic and acidic residues; the sequence is FFERDPEAEGEAPRKQE. Residues 33-41 form an N0 binding region; the sequence is DVVLSYKPT. The interval 45–324 is disordered; that stretch reads EDRSWLHGII…ANEEETSNTS (280 aa). A compositionally biased stretch (basic and acidic residues) spans 58 to 105; sequence EENKPSCKADDNNKDRAISTPTQDHRSGEESGISRRTSESKTETHARL. Polar residues predominate over residues 107–121; it reads DQQSIHRASRRGTSP. 2 stretches are compositionally biased toward basic and acidic residues: residues 132-144 and 151-167; these read RNTR…PNER and LTDE…KREE. Positions 190–208 are enriched in polar residues; it reads RTNNNGRSMETSSTHSTRI. Residues 239–253 show a composition bias toward basic and acidic residues; it reads TRSERTQNSELHKST. Residues 294–305 are compositionally biased toward polar residues; that stretch reads YTMNNANNNTKS. The interval 344–411 is multimerization; sequence FELSRSASHV…SSRDLHKRFS (68 aa). Residues 387–416 are a coiled coil; sequence EENRTLLKQIQEEINSSRDLHKRFSEYQKE. The interval 412 to 445 is l protein binding; sequence EYQKEQNSLMMANLSTLHIITDRGGKTGDPSDTT. The interval 434 to 455 is disordered; sequence RGGKTGDPSDTTRSPSVFTKGK. Residues 441–450 are compositionally biased toward polar residues; sequence PSDTTRSPSV. Residues 479–568 form an interaction with the nucleocapsid (N-RNA) region; the sequence is DLIREDELRD…FEEDIDSLTN (90 aa).

This sequence belongs to the respirovirus P protein family. In terms of assembly, homotetramer. Interacts (via multimerization domain) with polymerase L; this interaction forms the polymerase complex. Interacts (via N-terminus) with N0; this interaction allows P to chaperon N0 before encapsidation and form the N-P complex. Interacts (via C-terminus) with N-RNA template; this interaction positions the polymerase on the template.

In terms of biological role, essential cofactor of the RNA polymerase L that plays a central role in the transcription and replication by forming the polymerase complex with RNA polymerase L and recruiting L to the genomic N-RNA template for RNA synthesis. Also plays a central role in the encapsidation of nascent RNA chains by forming the encapsidation complex with the nucleocapsid protein N (N-P complex). Acts as a chaperone for newly synthesized free N protein, so-called N0, allowing encapsidation of nascent RNA chains during replication. The nucleoprotein protein N prevents excessive phosphorylation of P, which leads to down-regulation of viral transcription/ replication. Participates, together with N, in the formation of viral factories (viroplasms), which are large inclusions in the host cytoplasm where replication takes place. Recruits host PI4KB and remodel the host endoplasmic reticulum membrane to form viral replication factories. This chain is Phosphoprotein (P/C), found in Human parainfluenza 1 virus (strain C39) (HPIV-1).